The primary structure comprises 246 residues: 1-(5-phosphoribosyl)-5-[(5-phosphoribosylamino)methylideneamino] imidazole-4-carboxamide isomerase (246 aa).

Asp8 functions as the Proton acceptor in the catalytic mechanism. Residue Asp131 is the Proton donor of the active site.

It belongs to the HisA/HisF family.

It is found in the cytoplasm. It carries out the reaction 1-(5-phospho-beta-D-ribosyl)-5-[(5-phospho-beta-D-ribosylamino)methylideneamino]imidazole-4-carboxamide = 5-[(5-phospho-1-deoxy-D-ribulos-1-ylimino)methylamino]-1-(5-phospho-beta-D-ribosyl)imidazole-4-carboxamide. It participates in amino-acid biosynthesis; L-histidine biosynthesis; L-histidine from 5-phospho-alpha-D-ribose 1-diphosphate: step 4/9. In Lactococcus lactis subsp. cremoris (strain MG1363), this protein is 1-(5-phosphoribosyl)-5-[(5-phosphoribosylamino)methylideneamino] imidazole-4-carboxamide isomerase.